The following is a 238-amino-acid chain: Large ribosomal subunit protein uL5c (238 aa).

Belongs to the universal ribosomal protein uL5 family. As to quaternary structure, part of the 50S ribosomal subunit; contacts the 5S rRNA.

Its subcellular location is the plastid. It is found in the chloroplast. Functionally, binds 5S rRNA, forms part of the central protuberance of the 50S subunit. The chain is Large ribosomal subunit protein uL5c (rpl5) from Phaeodactylum tricornutum (strain CCAP 1055/1).